Here is a 247-residue protein sequence, read N- to C-terminus: MAQQGSGYQARYKRILLKLSGEALMGSEEFGIDPKVLDRMALEVGQLVGIGVQVGLVIGGGNLFRGAALSAAGMDRVTGDHMGMLATVMNALAMRDALERANISAIVMSAISMVGVTDHYDRRKAMRHLNSKEVVIFAAGTGNPFFTTDSAACLRAIEIDADVVLKATKVDGVYTADPFKDPHAEKFDHLTYDEVLDRKLGVMDLTAICLCRDHKMPLRVFNMNKPGALLNIVHGGAEGTLIEEGEQ.

Residue 18–21 (KLSG) coordinates ATP. Position 60 (Gly60) interacts with UMP. ATP is bound by residues Gly61 and Arg65. UMP-binding positions include Asp80 and 141–148 (TGNPFFTT). ATP is bound by residues Thr168, Tyr174, and Asp177.

This sequence belongs to the UMP kinase family. In terms of assembly, homohexamer.

It is found in the cytoplasm. It carries out the reaction UMP + ATP = UDP + ADP. It functions in the pathway pyrimidine metabolism; CTP biosynthesis via de novo pathway; UDP from UMP (UMPK route): step 1/1. Inhibited by UTP. Catalyzes the reversible phosphorylation of UMP to UDP. This chain is Uridylate kinase, found in Pseudomonas fluorescens (strain ATCC BAA-477 / NRRL B-23932 / Pf-5).